The primary structure comprises 85 residues: Conotoxin Im28.1 (85 aa).

Positions 1–21 are cleaved as a signal peptide; that stretch reads MPKLEMMLLVLLILPLCYIDA. Positions 22–40 are excised as a propeptide; the sequence is VGPPPPWNMEDEIIEHWQK.

The protein belongs to the conotoxin D superfamily. In terms of processing, contains 5 disulfide bonds. In terms of tissue distribution, expressed by the venom duct.

The protein localises to the secreted. Probable neurotoxin. The polypeptide is Conotoxin Im28.1 (Conus imperialis (Imperial cone)).